Consider the following 140-residue polypeptide: Nucleoside diphosphate kinase (140 aa).

ATP-binding residues include lysine 11, phenylalanine 59, arginine 87, threonine 93, arginine 104, and asparagine 114. Histidine 117 (pros-phosphohistidine intermediate) is an active-site residue.

This sequence belongs to the NDK family. Homotetramer. Mg(2+) is required as a cofactor.

The protein resides in the cytoplasm. The catalysed reaction is a 2'-deoxyribonucleoside 5'-diphosphate + ATP = a 2'-deoxyribonucleoside 5'-triphosphate + ADP. It catalyses the reaction a ribonucleoside 5'-diphosphate + ATP = a ribonucleoside 5'-triphosphate + ADP. In terms of biological role, major role in the synthesis of nucleoside triphosphates other than ATP. The ATP gamma phosphate is transferred to the NDP beta phosphate via a ping-pong mechanism, using a phosphorylated active-site intermediate. This is Nucleoside diphosphate kinase from Gluconobacter oxydans (strain 621H) (Gluconobacter suboxydans).